The sequence spans 464 residues: Argininosuccinate lyase (464 aa).

The protein belongs to the lyase 1 family. Argininosuccinate lyase subfamily.

The protein resides in the cytoplasm. The catalysed reaction is 2-(N(omega)-L-arginino)succinate = fumarate + L-arginine. It participates in amino-acid biosynthesis; L-arginine biosynthesis; L-arginine from L-ornithine and carbamoyl phosphate: step 3/3. The polypeptide is Argininosuccinate lyase (Alcanivorax borkumensis (strain ATCC 700651 / DSM 11573 / NCIMB 13689 / SK2)).